A 113-amino-acid polypeptide reads, in one-letter code: Pancreatic progenitor cell differentiation and proliferation factor A (113 aa).

Belongs to the PPDPF family.

Functionally, probable regulator of exocrine pancreas development. The sequence is that of Pancreatic progenitor cell differentiation and proliferation factor A (ppdpf-a) from Xenopus laevis (African clawed frog).